A 183-amino-acid chain; its full sequence is Ribosome rescue factor SmrB (183 aa).

In terms of domain architecture, Smr spans 98–173; it reads LDLHGLTQQQ…GDAALLVLIE (76 aa).

It belongs to the SmrB family. In terms of assembly, associates with collided ribosomes, but not with correctly translating polysomes.

Acts as a ribosome collision sensor. Detects stalled/collided disomes (pairs of ribosomes where the leading ribosome is stalled and a second ribosome has collided with it) and endonucleolytically cleaves mRNA at the 5' boundary of the stalled ribosome. Stalled/collided disomes form a new interface (primarily via the 30S subunits) that binds SmrB. Cleaved mRNA becomes available for tmRNA ligation, leading to ribosomal subunit dissociation and rescue of stalled ribosomes. This is Ribosome rescue factor SmrB from Klebsiella pneumoniae (strain 342).